The sequence spans 344 residues: Lipase chaperone (344 aa).

Residues 13-35 (RIAPYGAAGLAAIVGVAIWSGTG) traverse the membrane as a helical segment.

It belongs to the lipase chaperone family.

It is found in the cell inner membrane. May be involved in the folding of the extracellular lipase during its passage through the periplasm. This chain is Lipase chaperone, found in Burkholderia vietnamiensis (strain G4 / LMG 22486) (Burkholderia cepacia (strain R1808)).